The chain runs to 119 residues: Protein MRP-126 (119 aa).

EF-hand domains follow at residues Asp-23–Val-58 and Lys-59–Ala-94. Residues Thr-37, Glu-42, Asp-72, Asn-74, Asp-76, Gln-78, and Glu-83 each contribute to the Ca(2+) site.

The protein belongs to the S-100 family. Expressed in v-myb-transformed myelomonocytic cells.

The protein is Protein MRP-126 of Gallus gallus (Chicken).